The sequence spans 83 residues: RNA-binding protein Hfq (83 aa).

A Sm domain is found at 11 to 71; the sequence is DVFLNYIRKN…ISTIMPASPV (61 aa).

The protein belongs to the Hfq family. As to quaternary structure, homohexamer.

Its function is as follows. RNA chaperone that binds small regulatory RNA (sRNAs) and mRNAs to facilitate mRNA translational regulation in response to envelope stress, environmental stress and changes in metabolite concentrations. Also binds with high specificity to tRNAs. This chain is RNA-binding protein Hfq, found in Rhodospirillum rubrum (strain ATCC 11170 / ATH 1.1.1 / DSM 467 / LMG 4362 / NCIMB 8255 / S1).